The following is an 835-amino-acid chain: Translation initiation factor IF-2 (835 aa).

A disordered region spans residues 1–243 (MSDTDGKKTL…RARQKAMGGA (243 aa)). The span at 43–67 (VPKPGAGKPSAGGSSPAGDPSRRPA) shows a compositional bias: low complexity. 3 stretches are compositionally biased toward basic and acidic residues: residues 85-147 (KARE…EAKR), 157-166 (EAPKAERSAE), and 175-205 (EGGDNARRTTDRDREREQRQTRGKGRQDGRR). A tr-type G domain is found at 332–500 (PRPPVITIMG…AIALQAEILE (169 aa)). Residues 341 to 348 (GHVDHGKT) form a G1 region. A GTP-binding site is contributed by 341–348 (GHVDHGKT). The segment at 366–370 (GITQH) is G2. Residues 388–391 (DTPG) form a G3 region. GTP-binding positions include 388 to 392 (DTPGH) and 442 to 445 (NKID). Residues 442-445 (NKID) form a G4 region. Residues 478 to 480 (SAK) form a G5 region.

This sequence belongs to the TRAFAC class translation factor GTPase superfamily. Classic translation factor GTPase family. IF-2 subfamily.

The protein localises to the cytoplasm. In terms of biological role, one of the essential components for the initiation of protein synthesis. Protects formylmethionyl-tRNA from spontaneous hydrolysis and promotes its binding to the 30S ribosomal subunits. Also involved in the hydrolysis of GTP during the formation of the 70S ribosomal complex. This chain is Translation initiation factor IF-2, found in Ruegeria pomeroyi (strain ATCC 700808 / DSM 15171 / DSS-3) (Silicibacter pomeroyi).